The following is a 488-amino-acid chain: MAGPVRCLPPVVEATSIPHAPPVISKEVSEIVNNMLSVAIPAAAAASAQDQRFASQFRCGPEFATMKAQALEACRKILAENDQGGYTIPAKGLYPYQWNWDSALVSLGLAEMEEERAWEELDRLMSAQWEDGMVPHIVFHKPSSTYFPGPEIWGSPDKPRNSTGITQPPVAAISVRRLLEEAKDKALALAMARKLFPKLLAWHRWFYRARDPEGTGLVATIHPWETGMDNSPAWDEALARVPIDDIPPYVRRDLGHVDAKMRPQKAEYDRYLTLLYRFRALDYDEAKLYYETPFRVTDLCTNCILHKANEDLLWLAGATGACTDESEIRGWTARANVAFDTLFDVEAGLYRCKDQLTGQFLPAATSAGFLPLFAGVASGEKASAVARTLGRWLDDVAYGIPSCDPRDPWFEALRYWRGPVWLIVNWMVSEGLKRYGYGELAQRVERDSYELVKNGGIFEYYCPLTGMGAGGGCFSWTAAMCLAWLFKS.

Substrate-binding positions include Tyr94, Trp98 to Asp101, Tyr146, Gln167, and Gly227. The active-site Proton donor is the Asp229. Residues Arg262 and Tyr415–Trp416 each bind substrate. The active-site Proton acceptor is Glu459.

Belongs to the glycosyl hydrolase 63 family.

The catalysed reaction is (2R)-2-O-(alpha-D-mannosyl)-glycerate + H2O = D-mannose + (R)-glycerate. The enzyme catalyses (2R)-2-O-(alpha-D-glucopyranosyl)-glycerate + H2O = (R)-glycerate + D-glucose. With respect to regulation, activity is not dependent on divalent cations, but it is enhanced by Mn(2+). Catalyzes the hydrolysis of alpha-D-mannosyl-glycerate (MG) to D-glycerate and D-mannose. Can also hydrolyze alpha-D-glucopyranosyl-glycerate (GG)with lower efficiency. The chain is Mannosylglycerate hydrolase MGH2 from Selaginella moellendorffii (Spikemoss).